The sequence spans 118 residues: Ribosome-binding factor A (118 aa).

Belongs to the RbfA family. In terms of assembly, monomer. Binds 30S ribosomal subunits, but not 50S ribosomal subunits or 70S ribosomes.

Its subcellular location is the cytoplasm. Its function is as follows. One of several proteins that assist in the late maturation steps of the functional core of the 30S ribosomal subunit. Associates with free 30S ribosomal subunits (but not with 30S subunits that are part of 70S ribosomes or polysomes). Required for efficient processing of 16S rRNA. May interact with the 5'-terminal helix region of 16S rRNA. The chain is Ribosome-binding factor A from Dehalococcoides mccartyi (strain ATCC BAA-2266 / KCTC 15142 / 195) (Dehalococcoides ethenogenes (strain 195)).